Here is a 244-residue protein sequence, read N- to C-terminus: Cysteine-rich secretory protein 2 (244 aa).

Residues 1-21 form the signal peptide; that stretch reads MALLPVVVFLITMLLPCVLTN. The region spanning 43-170 is the SCP domain; the sequence is NKHNQLRKSV…SLKYYYVCQY (128 aa). Disulfide bonds link Cys-190-Cys-197, Cys-193-Cys-202, Cys-206-Cys-239, Cys-215-Cys-233, and Cys-224-Cys-237. The region spanning 206 to 239 is the ShKT domain; it reads CEYEDLLSNCESLKNTAGCEHQLLVEKCKATCRC.

It belongs to the CRISP family. In terms of assembly, interacts with NSUN4 isoform 3. Testis.

Its subcellular location is the secreted. May regulate some ion channels' activity and thereby regulate calcium fluxes during sperm capacitation. This chain is Cysteine-rich secretory protein 2 (CRISP2), found in Cavia porcellus (Guinea pig).